The following is a 461-amino-acid chain: tRNA modification GTPase MnmE (461 aa).

Arg-23, Glu-84, and Arg-123 together coordinate (6S)-5-formyl-5,6,7,8-tetrahydrofolate. The TrmE-type G domain maps to 216–383; that stretch reads GARAALIGRP…LGATVARLLL (168 aa). Asn-226 lines the K(+) pocket. GTP is bound by residues 226 to 231, 245 to 251, and 270 to 273; these read NAGKSS, TPIPGTT, and DTAG. Residue Ser-230 coordinates Mg(2+). The K(+) site is built by Thr-245, Ile-247, and Thr-250. Residue Thr-251 coordinates Mg(2+). Lys-461 serves as a coordination point for (6S)-5-formyl-5,6,7,8-tetrahydrofolate.

Belongs to the TRAFAC class TrmE-Era-EngA-EngB-Septin-like GTPase superfamily. TrmE GTPase family. As to quaternary structure, homodimer. Heterotetramer of two MnmE and two MnmG subunits. K(+) is required as a cofactor.

It is found in the cytoplasm. Functionally, exhibits a very high intrinsic GTPase hydrolysis rate. Involved in the addition of a carboxymethylaminomethyl (cmnm) group at the wobble position (U34) of certain tRNAs, forming tRNA-cmnm(5)s(2)U34. The chain is tRNA modification GTPase MnmE from Roseiflexus sp. (strain RS-1).